Here is a 1097-residue protein sequence, read N- to C-terminus: Translation initiation factor IF-2 (1097 aa).

Residues 79-458 (LEKRVSPQAD…RVIKKKPKKA (380 aa)) form a disordered region. Over residues 97–112 (AKKEASQEKADAHAKL) the composition is skewed to basic and acidic residues. The segment covering 157–173 (AATLAVEEAPIAAAPTE) has biased composition (low complexity). Basic and acidic residues-rich tracts occupy residues 174 to 190 (EPMH…KIDS) and 202 to 221 (VEVH…HAEE). Positions 224–236 (TPTTEASSEETSA) are enriched in low complexity. The span at 258–267 (RKTQNTTNVS) shows a compositional bias: polar residues. Over residues 268–286 (EENKQHEKQPETLKSDKAM) the composition is skewed to basic and acidic residues. Residues 340 to 363 (SDSLQAEISRQQNEISNRFSQSEN) show a composition bias toward polar residues. Residues 376-385 (HKKKRKRKKN) are compositionally biased toward basic residues. Over residues 402-443 (PKQEEKPVKKEKPKEREKPAAGKKEQTPGKKPVREDQKERVL) the composition is skewed to basic and acidic residues. The region spanning 591–761 (TRPPVVTIMG…LVEAELLELK (171 aa)) is the tr-type G domain. A G1 region spans residues 600–607 (GHVDHGKT). A GTP-binding site is contributed by 600-607 (GHVDHGKT). The segment at 625-629 (GITQH) is G2. The segment at 647 to 650 (DTPG) is G3. GTP contacts are provided by residues 647–651 (DTPGH) and 701–704 (NKID). The interval 701 to 704 (NKID) is G4. Residues 737 to 739 (SAK) form a G5 region.

The protein belongs to the TRAFAC class translation factor GTPase superfamily. Classic translation factor GTPase family. IF-2 subfamily.

It is found in the cytoplasm. In terms of biological role, one of the essential components for the initiation of protein synthesis. Protects formylmethionyl-tRNA from spontaneous hydrolysis and promotes its binding to the 30S ribosomal subunits. Also involved in the hydrolysis of GTP during the formation of the 70S ribosomal complex. This is Translation initiation factor IF-2 from Chloroherpeton thalassium (strain ATCC 35110 / GB-78).